We begin with the raw amino-acid sequence, 669 residues long: NADH-ubiquinone oxidoreductase chain 5 (669 aa).

The next 15 membrane-spanning stretches (helical) occupy residues 3 to 23, 50 to 70, 81 to 100, 119 to 139, 178 to 198, 211 to 231, 253 to 273, 286 to 306, 322 to 342, 377 to 397, 423 to 443, 464 to 484, 522 to 542, 628 to 648, and 649 to 669; these read LLIVILPLIGSFAAGFFGRFL, VALCASACYIKIAPWIFSELF, LTVILLLVVTIVSSLVHIYS, IFTFFMLMLVTGDNFIQLFLG, LALGIMGCFTIFQTVDFSTIF, FLFCNMGFHAITVICILVFIG, TPVSALIHAATMVTAGVFMIA, LIVITFVGAMTSFFAATTGIL, LGYMIFACGISNYSVSVFHLM, LLPFTYAMMLIGSLSLIGFPF, FWLGSVSVFFTSYYSFRLLFL, ILMAIPLILLAFGSIFVGYLA, LIPILFSTLGSFVAYSVNFVV, AFVMLLGLTIFISVIGLWDFI, and SFWVDNRLYFIYIVSFLFINI.

Belongs to the complex I subunit 5 family.

The protein resides in the mitochondrion inner membrane. It catalyses the reaction a ubiquinone + NADH + 5 H(+)(in) = a ubiquinol + NAD(+) + 4 H(+)(out). In terms of biological role, core subunit of the mitochondrial membrane respiratory chain NADH dehydrogenase (Complex I) that is believed to belong to the minimal assembly required for catalysis. Complex I functions in the transfer of electrons from NADH to the respiratory chain. The immediate electron acceptor for the enzyme is believed to be ubiquinone. The chain is NADH-ubiquinone oxidoreductase chain 5 (ND5) from Marchantia polymorpha (Common liverwort).